Here is a 302-residue protein sequence, read N- to C-terminus: D-alanine--D-alanine ligase B (302 aa).

Residues 99-294 (KKVLKAENIR…YSKFIDLIIE (196 aa)) form the ATP-grasp domain. Position 126-181 (126-181 (IEEIGYPVFVKPNNGGSSVATFKVYKKEDIKNSVMEGLKYDEEVIIESFIKGREIT)) interacts with ATP. Mg(2+) contacts are provided by Asp-248, Glu-261, and Asn-263.

It belongs to the D-alanine--D-alanine ligase family. The cofactor is Mg(2+). Mn(2+) is required as a cofactor.

The protein resides in the cytoplasm. The catalysed reaction is 2 D-alanine + ATP = D-alanyl-D-alanine + ADP + phosphate + H(+). The protein operates within cell wall biogenesis; peptidoglycan biosynthesis. Functionally, cell wall formation. The chain is D-alanine--D-alanine ligase B from Clostridium perfringens (strain 13 / Type A).